Consider the following 226-residue polypeptide: Uracil-DNA glycosylase (226 aa).

Catalysis depends on Asp64, which acts as the Proton acceptor.

Belongs to the uracil-DNA glycosylase (UDG) superfamily. UNG family.

It localises to the cytoplasm. It catalyses the reaction Hydrolyzes single-stranded DNA or mismatched double-stranded DNA and polynucleotides, releasing free uracil.. Functionally, excises uracil residues from the DNA which can arise as a result of misincorporation of dUMP residues by DNA polymerase or due to deamination of cytosine. In Proteus mirabilis (strain HI4320), this protein is Uracil-DNA glycosylase.